Reading from the N-terminus, the 1171-residue chain is DExH-box ATP-dependent RNA helicase DExH15 chloroplastic (1171 aa).

The transit peptide at 1–58 (MNTLPVVSLTASSSFKFFHFPSLHRSLSHSPNFSFTKSLILNPNHLSFKSTLNSLSPS) directs the protein to the chloroplast. Residues 53–62 (NSLSPSQSQL) are compositionally biased toward polar residues. Positions 53-111 (NSLSPSQSQLYEEEDDEEEEEEDEDDDDEAADEYDNISDEIRNSDDDDDDEETEFSVDL) are disordered. Composition is skewed to acidic residues over residues 63 to 90 (YEEEDDEEEEEEDEDDDDEAADEYDNIS) and 97 to 107 (DDDDDDEETEF). One can recognise a Helicase ATP-binding domain in the interval 163–327 (IEAFLRGSSV…WIGEIHGKTE (165 aa)). Residue 176-183 (APTSSGKT) participates in ATP binding. Positions 275 to 278 (DEVH) match the DEVH box motif. Residues 424–620 (QISDTLWHLQ…ASYGMVLNLV (197 aa)) form the Helicase C-terminal domain.

Belongs to the DExH box helicase family.

It is found in the plastid. Its subcellular location is the chloroplast. It localises to the cytoplasmic granule. It carries out the reaction ATP + H2O = ADP + phosphate + H(+). Functionally, RNA helicase involved in group II intron splicing. Essential protein required during embryogenesis. Involved in post-transcriptional gene silencing. Modulates the determination of cell fate. Necessary for normal plasmodesmata (PD) development and aperture regulation. The chain is DExH-box ATP-dependent RNA helicase DExH15 chloroplastic (ISE2) from Arabidopsis thaliana (Mouse-ear cress).